A 473-amino-acid polypeptide reads, in one-letter code: Calcium/calmodulin-dependent protein kinase type IV (473 aa).

Phosphoserine; by autocatalysis is present on residues Ser-12 and Ser-13. Residues 46-300 (FEVESELGRG…TFQALQHPWV (255 aa)) form the Protein kinase domain. ATP-binding positions include 52–60 (LGRGATSIV) and Lys-75. Thr-57 is a glycosylation site (O-linked (GlcNAc) threonine). A glycan (O-linked (GlcNAc) serine) is linked at Ser-58. An O-linked (GlcNAc) serine glycan is attached at Ser-137. The active-site Proton acceptor is Asp-164. A glycan (O-linked (GlcNAc) serine) is linked at Ser-189. Residue Thr-200 is modified to Phosphothreonine; by CaMKK1 and CaMKK2. The segment at 305 to 321 (ANFVHMDTAQKKLQEFN) is autoinhibitory domain. The interval 306–323 (NFVHMDTAQKKLQEFNAR) is PP2A-binding. The segment at 322-341 (ARRKLKAAVKAVVASSRLGS) is calmodulin-binding. A Phosphoserine; by autocatalysis modification is found at Ser-336. The residue at position 341 (Ser-341) is a Phosphoserine. The span at 341–350 (SASSSHGSIQ) shows a compositional bias: low complexity. 2 disordered regions span residues 341–368 (SASS…GNED) and 445–473 (EEAA…LPEY). O-linked (GlcNAc) serine glycosylation is found at Ser-344, Ser-345, and Ser-356. Ser-360 bears the Phosphoserine mark.

Belongs to the protein kinase superfamily. CAMK Ser/Thr protein kinase family. CaMK subfamily. As to quaternary structure, monomer. Interacts with protein phosphatase 2A (PPP2CA/PPP2CB); the interaction is mutually exclusive with binding to Ca(2+)/calmodulin. Post-translationally, phosphorylated by CaMKK1 and CaMKK2 on Thr-200. Dephosphorylated by protein phosphatase 2A. Autophosphorylated on Ser-12 and Ser-13. Glycosylation at Ser-189 modulates the phosphorylation of CaMK4 at Thr-200 and negatively regulates its activity toward CREB1 in basal conditions and during early inomycin stimulation. As to expression, expressed in brain, thymus, CD4 T-cells, testis and epithelial ovarian cancer tissue.

Its subcellular location is the cytoplasm. It localises to the nucleus. The enzyme catalyses L-seryl-[protein] + ATP = O-phospho-L-seryl-[protein] + ADP + H(+). The catalysed reaction is L-threonyl-[protein] + ATP = O-phospho-L-threonyl-[protein] + ADP + H(+). With respect to regulation, activated by Ca(2+)/calmodulin. Binding of calmodulin results in conformational change that relieves intrasteric autoinhibition and allows phosphorylation of Thr-200 within the activation loop by CaMKK1 or CaMKK2. Phosphorylation of Thr-200 results in a 10-20-fold increase in total activity to generate Ca(2+)/calmodulin-independent activity. Autophosphorylation of the N-terminus Ser-12 and Ser-13 is required for full activation. Inactivated by protein phosphatase 2A (PPP2CA/PPP2CB) which dephosphorylates Thr-200, thereby terminating autonomous activity and helping to maintain the enzyme in its autoinhibited state. Functionally, calcium/calmodulin-dependent protein kinase that operates in the calcium-triggered CaMKK-CaMK4 signaling cascade and regulates, mainly by phosphorylation, the activity of several transcription activators, such as CREB1, MEF2D, JUN and RORA, which play pivotal roles in immune response, inflammation, and memory consolidation. In the thymus, regulates the CD4(+)/CD8(+) double positive thymocytes selection threshold during T-cell ontogeny. In CD4 memory T-cells, is required to link T-cell antigen receptor (TCR) signaling to the production of IL2, IFNG and IL4 (through the regulation of CREB and MEF2). Regulates the differentiation and survival phases of osteoclasts and dendritic cells (DCs). Mediates DCs survival by linking TLR4 and the regulation of temporal expression of BCL2. Phosphorylates the transcription activator CREB1 on 'Ser-133' in hippocampal neuron nuclei and contribute to memory consolidation and long term potentiation (LTP) in the hippocampus. Can activate the MAP kinases MAPK1/ERK2, MAPK8/JNK1 and MAPK14/p38 and stimulate transcription through the phosphorylation of ELK1 and ATF2. Can also phosphorylate in vitro CREBBP, PRM2, MEF2A and STMN1/OP18. This Homo sapiens (Human) protein is Calcium/calmodulin-dependent protein kinase type IV (CAMK4).